A 492-amino-acid chain; its full sequence is Trichothecene C-15 hydroxylase (492 aa).

Residues 6–26 (LWPLLALSGGTGLAYLVVVVV) form a helical membrane-spanning segment. Residues 88–106 (AMKDVRGHRKSGEPEHGKD) show a composition bias toward basic and acidic residues. The interval 88–116 (AMKDVRGHRKSGEPEHGKDPISVQSNGDN) is disordered. N-linked (GlcNAc...) asparagine glycosylation is found at asparagine 124, asparagine 198, and asparagine 290. Position 438 (cysteine 438) interacts with heme.

The protein belongs to the cytochrome P450 family. It depends on heme as a cofactor.

The protein localises to the membrane. Its pathway is sesquiterpene biosynthesis; trichothecene biosynthesis. Functionally, trichothecene C-15 hydroxylase; part of the core gene cluster that mediates the biosynthesis of trichothecenes, a very large family of chemically related bicyclic sesquiterpene compounds acting as mycotoxins, including T2-toxin. The biosynthesis of trichothecenes begins with the cyclization of farnesyl diphosphate to trichodiene and is catalyzed by the trichodiene synthase TRI5. Trichodiene undergoes a series of oxygenations catalyzed by the cytochrome P450 monooxygenase TRI4. TRI4 controls the addition of four oxygens at C-2, C-3, C-11, and the C-12, C-13-epoxide to form the intermediate isotrichotriol. Isotrichotriol then undergoes a non-enzymatic isomerization and cyclization to form isotrichodermol. During this process, the oxygen at the C-2 position becomes the pyran ring oxygen and the hydroxyl group at C-11 is lost. More complex type A trichothecenes are built by modifying isotrichodermol through a series of paired hydroxylation and acetylation or acylation steps. Isotrichodermol is converted to isotrichodermin by the acetyltransferase TRI101. TRI101 encodes a C-3 transacetylase that acts as a self-protection or resistance factor during biosynthesis and that the presence of a free C-3 hydroxyl group is a key component of Fusarium trichothecene phytotoxicity. A second hydroxyl group is added to C-15 by the trichothecene C-15 hydroxylase TRI11, producing 15-decalonectrin, which is then acetylated by TRI3, producing calonectrin. A third hydroxyl group is added at C-4 by the cytochrome P450 monooxygenase TRI13, converting calonectrin to 3,15-diacetoxyspirpenol, which is subsequently acetylated by the acetyltransferase TRI7. A fourth hydroxyl group is added to C-8 by the cytochrome P450 monooxygenase TRI1, followed by the addition of an isovaleryl moiety by TRI16. Finally, the acetyl group is removed from the C-3 position by the trichothecene C-3 esterase TRI8 to produce T-2 toxin. This Fusarium sporotrichioides protein is Trichothecene C-15 hydroxylase.